The sequence spans 387 residues: Enoyl-[acyl-carrier-protein] reductase 2, mitochondrial (387 aa).

Residues 1 to 23 (MYRNQLARASLRSTSSINQIRNM) constitute a mitochondrion transit peptide. Tyr79 acts as the Proton donor in catalysis. NADP(+)-binding positions include Asn172, 199–202 (NSAV), 222–224 (RDR), 297–300 (YGGM), 322–324 (FWV), and Lys382.

This sequence belongs to the zinc-containing alcohol dehydrogenase family. Quinone oxidoreductase subfamily. Homodimer.

It is found in the mitochondrion matrix. It carries out the reaction a 2,3-saturated acyl-[ACP] + NADP(+) = a (2E)-enoyl-[ACP] + NADPH + H(+). Its function is as follows. Catalyzes the NADPH-dependent reduction of trans-2-enoyl thioesters in mitochondrial fatty acid synthesis (fatty acid synthesis type II). Fatty acid chain elongation in mitochondria uses acyl carrier protein (ACP) as an acyl group carrier, but the enzyme accepts both ACP and CoA thioesters as substrates in vitro. Required for respiration and the maintenance of the mitochondrial compartment. The polypeptide is Enoyl-[acyl-carrier-protein] reductase 2, mitochondrial (ETR2) (Debaryomyces hansenii (strain ATCC 36239 / CBS 767 / BCRC 21394 / JCM 1990 / NBRC 0083 / IGC 2968) (Yeast)).